The sequence spans 127 residues: Small ribosomal subunit protein uS12 (127 aa).

Asp89 carries the 3-methylthioaspartic acid modification.

This sequence belongs to the universal ribosomal protein uS12 family. In terms of assembly, part of the 30S ribosomal subunit. Contacts proteins S8 and S17. May interact with IF1 in the 30S initiation complex.

With S4 and S5 plays an important role in translational accuracy. Its function is as follows. Interacts with and stabilizes bases of the 16S rRNA that are involved in tRNA selection in the A site and with the mRNA backbone. Located at the interface of the 30S and 50S subunits, it traverses the body of the 30S subunit contacting proteins on the other side and probably holding the rRNA structure together. The combined cluster of proteins S8, S12 and S17 appears to hold together the shoulder and platform of the 30S subunit. This is Small ribosomal subunit protein uS12 from Campylobacter lari (strain RM2100 / D67 / ATCC BAA-1060).